The primary structure comprises 224 residues: Probable 2-phosphosulfolactate phosphatase (224 aa).

Belongs to the ComB family. It depends on Mg(2+) as a cofactor.

It catalyses the reaction (2R)-O-phospho-3-sulfolactate + H2O = (2R)-3-sulfolactate + phosphate. This is Probable 2-phosphosulfolactate phosphatase from Pseudothermotoga lettingae (strain ATCC BAA-301 / DSM 14385 / NBRC 107922 / TMO) (Thermotoga lettingae).